Here is a 274-residue protein sequence, read N- to C-terminus: Protein TIC 20-I, chloroplastic (274 aa).

The N-terminal 65 residues, 1-65 (MITGYSTPSA…ELPRVSRGVP (65 aa)), are a transit peptide targeting the chloroplast. Helical transmembrane passes span 130-152 (LPYL…LHPF), 167-187 (IGRL…LGIV), 200-220 (VVMG…SKWM), and 229-249 (FGMH…LESI).

It belongs to the Tic20 family. As to quaternary structure, part of the Tic complex. Component of the 1-MD complex, composed of TIC20-I, TIC214, TIC100 and TIC56. Interacts with the translocating preproteins. Hydrolysis of ATP is essential for the formation of this complex. The 1-MD complex interacts with TIC21. Expressed in leaves, shoots and roots. High expression in mature photosynthetic tissues. Lower levels in non-photosynthetic tissues and roots.

The protein resides in the plastid. The protein localises to the chloroplast inner membrane. Involved in protein precursor import into chloroplasts. May be part of an intermediate translocation complex acting as a protein-conducting channel at the inner envelope. Seems to be specific for photosynthesis-related pre-proteins. Partially redundant with TIC20-IV, but not with TIC20-II or TIC20-V. This chain is Protein TIC 20-I, chloroplastic, found in Arabidopsis thaliana (Mouse-ear cress).